Consider the following 246-residue polypeptide: Large ribosomal subunit protein uL3 (246 aa).

The interval 140–162 is disordered; it reads SHRSIGSTGGRQDPGKTFKNKKM. The residue at position 151 (glutamine 151) is an N5-methylglutamine.

The protein belongs to the universal ribosomal protein uL3 family. In terms of assembly, part of the 50S ribosomal subunit. Forms a cluster with proteins L14 and L19. Post-translationally, methylated by PrmB.

Functionally, one of the primary rRNA binding proteins, it binds directly near the 3'-end of the 23S rRNA, where it nucleates assembly of the 50S subunit. This is Large ribosomal subunit protein uL3 from Methylobacterium sp. (strain 4-46).